We begin with the raw amino-acid sequence, 384 residues long: Chaperone protein DnaJ (384 aa).

The J domain occupies 5-70 (DYYEVLGVSK…DKKAAYDRYG (66 aa)). Residues 16-47 (ASSDDIKKGYRRKAKELHPDRNKDDPNAEAQF) are disordered. Positions 31 to 47 (ELHPDRNKDDPNAEAQF) are enriched in basic and acidic residues. The CR-type zinc-finger motif lies at 143–221 (GLQKTINVPT…CQGAGRVEKD (79 aa)). Cys-156, Cys-159, Cys-173, Cys-176, Cys-195, Cys-198, Cys-209, and Cys-212 together coordinate Zn(2+). 4 CXXCXGXG motif repeats span residues 156 to 163 (CKTCNGSG), 173 to 180 (CPTCSGMG), 195 to 202 (CPTCSGLG), and 209 to 216 (CKSCQGAG).

This sequence belongs to the DnaJ family. Homodimer. Zn(2+) serves as cofactor.

The protein resides in the cytoplasm. Functionally, participates actively in the response to hyperosmotic and heat shock by preventing the aggregation of stress-denatured proteins and by disaggregating proteins, also in an autonomous, DnaK-independent fashion. Unfolded proteins bind initially to DnaJ; upon interaction with the DnaJ-bound protein, DnaK hydrolyzes its bound ATP, resulting in the formation of a stable complex. GrpE releases ADP from DnaK; ATP binding to DnaK triggers the release of the substrate protein, thus completing the reaction cycle. Several rounds of ATP-dependent interactions between DnaJ, DnaK and GrpE are required for fully efficient folding. Also involved, together with DnaK and GrpE, in the DNA replication of plasmids through activation of initiation proteins. The protein is Chaperone protein DnaJ of Roseobacter denitrificans (strain ATCC 33942 / OCh 114) (Erythrobacter sp. (strain OCh 114)).